Here is a 56-residue protein sequence, read N- to C-terminus: uncharacterized protein (56 aa).

This is an uncharacterized protein from Thermoproteus tenax virus 1 (strain KRA1) (TTV1).